The chain runs to 580 residues: High affinity choline transporter 1 (580 aa).

Over M1–E6 the chain is Extracellular. The helical transmembrane segment at G7 to W27 threads the bilayer. Residues R28–D48 lie on the Cytoplasmic side of the membrane. A helical transmembrane segment spans residues I49–N69. The Extracellular segment spans residues G70–G81. Residues L82–F102 form a helical membrane-spanning segment. Residues A103–R125 are Cytoplasmic-facing. A helical membrane pass occupies residues M126–F146. Topologically, residues S147 to S164 are extracellular. Residues V165–A185 traverse the membrane as a helical segment. The Cytoplasmic portion of the chain corresponds to Y186–Q191. A helical membrane pass occupies residues L192–V212. Topologically, residues A213–V237 are extracellular. Residues Y238 to F258 traverse the membrane as a helical segment. Topologically, residues Q259–S274 are cytoplasmic. Residues F275 to G295 form a helical membrane-spanning segment. Over A296 to D317 the chain is Extracellular. N-linked (GlcNAc...) asparagine glycosylation occurs at N301. A helical membrane pass occupies residues M318–G338. Over A339–E376 the chain is Cytoplasmic. The helical transmembrane segment at I377–L397 threads the bilayer. The Extracellular portion of the chain corresponds to L398–W406. A helical transmembrane segment spans residues Y407–V427. Residues K428–A435 are Cytoplasmic-facing. Residues V436–L456 form a helical membrane-spanning segment. At Q457–T481 the chain is on the extracellular side. A helical transmembrane segment spans residues L482 to F502. A mediates interaction with SEC14L1 region spans residues F502 to Q580. Residues E503–Q580 are Cytoplasmic-facing. Residues D527–V532 carry the Dileucine-like motif motif.

It belongs to the sodium:solute symporter (SSF) (TC 2.A.21) family. As to quaternary structure, homooligomerizes at cell surface. Interacts with SEC14L1; may regulate SLC5A7. Phosphorylated. As to expression, expressed in putamen, spinal cord and medulla. Expressed in cholinergic neurons.

Its subcellular location is the presynaptic cell membrane. It localises to the cell projection. It is found in the axon. The protein localises to the early endosome membrane. The protein resides in the cytoplasmic vesicle. Its subcellular location is the secretory vesicle. It localises to the synaptic vesicle membrane. It carries out the reaction choline(out) + n Na(+)(out) = choline(in) + n Na(+)(in). Choline uptake activity is regulated by SLC5A7/CHT1 internalization (inactive form) from the cell surface and recycling of internalized SLC5A7/CHT1 into the cell surface (active form). Activated by extracellular chloride ion. Specifically inhibited by nanomolar concentrations of hemicholinium 3. In terms of biological role, high-affinity Na(+)-coupled choline transmembrane symporter. Functions as an electrogenic, voltage-dependent transporter with variable charge/choline stoichiometry. Choline uptake and choline-induced current is also Cl(-)-dependent where Cl(-) is likely a regulatory ion rather than cotransported ion. Plays a critical role in acetylcholine (ACh) synthesis by taking up the substrate choline from the synaptic cleft into the presynaptic nerve terminals after neurotransmitter release. SLC5A7/CHT1-mediated choline high-affinity transport in cholinergic neurons is the rate-limiting step for production of ACh, thereby facilitating communication by subsequent action potentials. Localized predominantly in presynaptic terminal intracellular organelles, and translocated to the plasma membrane in active form in response to neuronal activity. In Homo sapiens (Human), this protein is High affinity choline transporter 1.